The chain runs to 780 residues: Nuclear cap-binding protein subunit 1 (780 aa).

The disordered stretch occupies residues 1–25 (MSSYRGSTRPRKRTREGENYGFRPH). Position 29 is a phosphoserine (serine 29). The MIF4G domain maps to 34-249 (AARIKKDITF…KQLILSREND (216 aa)). Residues 738–780 (ANEPVQENTSEEQEDTKMQPVDAVDEQPSENNQTAADATNEEK) form a disordered region.

The protein belongs to the NCBP1 family. In terms of assembly, component of the nuclear cap-binding complex (CBC), a heterodimer composed of cbc1 and cbc2 that interacts with capped RNAs.

The protein localises to the cytoplasm. Its subcellular location is the perinuclear region. It localises to the nucleus. Functionally, component of the CBC complex, which binds cotranscriptionally to the 5'-cap of pre-mRNAs and is involved in maturation, export and degradation of nuclear mRNAs. The chain is Nuclear cap-binding protein subunit 1 (cbc1) from Schizosaccharomyces pombe (strain 972 / ATCC 24843) (Fission yeast).